The following is a 362-amino-acid chain: HMG box-containing protein C19G7.04 (362 aa).

Residues 135–299 (KCFLARLEDE…RLCKSQIKQI (165 aa)) enclose the SprT-like domain. The HMG box DNA-binding region spans 306 to 348 (PNAFQIFLKENSKRLRKLHPHITHKELMKKLSDEYHRTKDAKQ).

The protein localises to the nucleus. The protein resides in the cytoplasm. It is found in the cytoskeleton. It localises to the spindle. The polypeptide is HMG box-containing protein C19G7.04 (Schizosaccharomyces pombe (strain 972 / ATCC 24843) (Fission yeast)).